The primary structure comprises 199 residues: Elongation factor Ts (199 aa).

The involved in Mg(2+) ion dislocation from EF-Tu stretch occupies residues 82–85; sequence TDFV.

Belongs to the EF-Ts family.

It localises to the cytoplasm. Associates with the EF-Tu.GDP complex and induces the exchange of GDP to GTP. It remains bound to the aminoacyl-tRNA.EF-Tu.GTP complex up to the GTP hydrolysis stage on the ribosome. The protein is Elongation factor Ts of Leptospira interrogans serogroup Icterohaemorrhagiae serovar Lai (strain 56601).